The chain runs to 354 residues: tRNA N6-adenosine threonylcarbamoyltransferase (354 aa).

Fe cation contacts are provided by His-115 and His-119. Substrate-binding positions include 138 to 142 (LVSGG), Asp-171, Gly-184, and Asn-276. Asp-304 is a Fe cation binding site.

It belongs to the KAE1 / TsaD family. It depends on Fe(2+) as a cofactor.

The protein localises to the cytoplasm. It carries out the reaction L-threonylcarbamoyladenylate + adenosine(37) in tRNA = N(6)-L-threonylcarbamoyladenosine(37) in tRNA + AMP + H(+). Functionally, required for the formation of a threonylcarbamoyl group on adenosine at position 37 (t(6)A37) in tRNAs that read codons beginning with adenine. Is involved in the transfer of the threonylcarbamoyl moiety of threonylcarbamoyl-AMP (TC-AMP) to the N6 group of A37, together with TsaE and TsaB. TsaD likely plays a direct catalytic role in this reaction. In Xanthomonas oryzae pv. oryzae (strain MAFF 311018), this protein is tRNA N6-adenosine threonylcarbamoyltransferase.